The chain runs to 69 residues: Protein SlyX homolog (69 aa).

It belongs to the SlyX family.

In Pseudomonas paraeruginosa (strain DSM 24068 / PA7) (Pseudomonas aeruginosa (strain PA7)), this protein is Protein SlyX homolog.